Reading from the N-terminus, the 658-residue chain is Protein cueball (658 aa).

At 1 to 543 (MSGVTARMEN…SYCKNSFNRT (543 aa)) the chain is on the extracellular side. Residues asparagine 25 and asparagine 122 are each glycosylated (N-linked (GlcNAc...) asparagine). 3 LDL-receptor class B repeats span residues 100–142 (RKLY…NHDL), 152–195 (RHLY…DHYS), and 196–241 (NRIY…NSRY). EGF-like domains lie at 352-384 (EIPICNNYCVHGKCVIGRDNRPTCECDAKFEGE), 387-422 (DRSKCDGFCLNSGNCSFSDATATCACPKNFSGKRCE), and 458-495 (EEYTCNNYCLNDGKCVLNNETMLVECRCGAEYTGKRCE). 8 cysteine pairs are disulfide-bonded: cysteine 356-cysteine 365, cysteine 360-cysteine 375, cysteine 391-cysteine 401, cysteine 395-cysteine 410, cysteine 412-cysteine 421, cysteine 462-cysteine 472, cysteine 466-cysteine 483, and cysteine 485-cysteine 494. Asparagine 400 and asparagine 415 each carry an N-linked (GlcNAc...) asparagine glycan. N-linked (GlcNAc...) asparagine glycosylation is present at asparagine 476. N-linked (GlcNAc...) asparagine glycosylation is present at asparagine 541. A helical transmembrane segment spans residues 544 to 564 (VVYASLAFAASLFILMVILLI). At 565–658 (VRRFYEEGRP…SCAGGDKNLP (94 aa)) the chain is on the cytoplasmic side.

It belongs to the cueball family.

The protein resides in the cell membrane. Has a role in spermatogenesis and oogenesis. The protein is Protein cueball of Culex quinquefasciatus (Southern house mosquito).